The following is a 330-amino-acid chain: Diacylglycerol acyltransferase/mycolyltransferase Ag85B (330 aa).

An N-terminal signal peptide occupies residues 1-40 (MTDLSKKVRAWGRRLLVGTAAAVTLPGLIGLAGGAPTAGA). 82–83 (LR) lines the substrate pocket. The tract at residues 98–108 (FEWYYQSGLSI) is fibronectin-binding. A disulfide bridge connects residues cysteine 127 and cysteine 132. Residues serine 166 and aspartate 194 each contribute to the substrate site. The active-site Nucleophile is the serine 166. The active site involves glutamate 270. Substrate-binding positions include 272-275 (FVRS), lysine 279, and 302-304 (HSW). Histidine 302 is a catalytic residue.

This sequence belongs to the mycobacterial A85 antigen family.

The protein localises to the secreted. The catalysed reaction is 2 alpha,alpha'-trehalose 6-mycolate = alpha,alpha'-trehalose 6,6'-bismycolate + alpha,alpha-trehalose. The enzyme catalyses an acyl-CoA + a 1,2-diacyl-sn-glycerol = a triacyl-sn-glycerol + CoA. Its function is as follows. The antigen 85 proteins (FbpA, FbpB, FbpC) are responsible for the high affinity of mycobacteria for fibronectin, a large adhesive glycoprotein, which facilitates the attachment of M.tuberculosis to murine alveolar macrophages (AMs). They also help to maintain the integrity of the cell wall by catalyzing the transfer of mycolic acids to cell wall arabinogalactan and through the synthesis of alpha,alpha-trehalose dimycolate (TDM, cord factor). They catalyze the transfer of a mycoloyl residue from one molecule of alpha,alpha-trehalose monomycolate (TMM) to another TMM, leading to the formation of TDM. This Mycobacterium scrofulaceum protein is Diacylglycerol acyltransferase/mycolyltransferase Ag85B (fbpB).